The chain runs to 75 residues: UPF0270 protein Pfl01_4103 (75 aa).

This sequence belongs to the UPF0270 family.

The protein is UPF0270 protein Pfl01_4103 of Pseudomonas fluorescens (strain Pf0-1).